Consider the following 591-residue polypeptide: UvrABC system protein C (591 aa).

Residues 14 to 91 (DQPGCYLMKD…IKKHDPKYNV (78 aa)) enclose the GIY-YIG domain. Positions 196–231 (KEVKVELEKKMHKAAEELNFERAKELRDTLGYMEAV) constitute a UVR domain.

It belongs to the UvrC family. Interacts with UvrB in an incision complex.

It localises to the cytoplasm. Functionally, the UvrABC repair system catalyzes the recognition and processing of DNA lesions. UvrC both incises the 5' and 3' sides of the lesion. The N-terminal half is responsible for the 3' incision and the C-terminal half is responsible for the 5' incision. In Halalkalibacterium halodurans (strain ATCC BAA-125 / DSM 18197 / FERM 7344 / JCM 9153 / C-125) (Bacillus halodurans), this protein is UvrABC system protein C.